We begin with the raw amino-acid sequence, 133 residues long: Arsenate reductase 1 (133 aa).

Catalysis depends on nucleophile residues Cys10, Cys82, and Cys89. Cystine bridges form between Cys10–Cys82 and Cys82–Cys89.

This sequence belongs to the low molecular weight phosphotyrosine protein phosphatase family. Thioredoxin-coupled ArsC subfamily.

It is found in the cytoplasm. The catalysed reaction is arsenate + [thioredoxin]-dithiol + H(+) = arsenite + [thioredoxin]-disulfide + H2O. Catalyzes the reduction of arsenate [As(V)] to arsenite [As(III)]. This Staphylococcus haemolyticus (strain JCSC1435) protein is Arsenate reductase 1.